Consider the following 277-residue polypeptide: NADPH-dependent 7-cyano-7-deazaguanine reductase (277 aa).

Substrate is bound at residue 83–85 (VES). 85 to 86 (SK) lines the NADPH pocket. The active-site Thioimide intermediate is the Cys184. The active-site Proton donor is the Asp191. Position 223-224 (223-224 (HE)) interacts with substrate. 252–253 (RG) lines the NADPH pocket.

It belongs to the GTP cyclohydrolase I family. QueF type 2 subfamily. As to quaternary structure, homodimer.

The protein localises to the cytoplasm. The enzyme catalyses 7-aminomethyl-7-carbaguanine + 2 NADP(+) = 7-cyano-7-deazaguanine + 2 NADPH + 3 H(+). The protein operates within tRNA modification; tRNA-queuosine biosynthesis. Its function is as follows. Catalyzes the NADPH-dependent reduction of 7-cyano-7-deazaguanine (preQ0) to 7-aminomethyl-7-deazaguanine (preQ1). In Ralstonia nicotianae (strain ATCC BAA-1114 / GMI1000) (Ralstonia solanacearum), this protein is NADPH-dependent 7-cyano-7-deazaguanine reductase.